Consider the following 210-residue polypeptide: Pyridoxine/pyridoxamine 5'-phosphate oxidase (210 aa).

Substrate is bound by residues 7–10 (RQSY) and K65. Residues 60 to 65 (RIVLIK), 75 to 76 (FT), R81, K82, and Q104 each bind FMN. Residues Y122, R126, and S130 each contribute to the substrate site. FMN-binding positions include 139-140 (QS) and W182. 188–190 (RLH) provides a ligand contact to substrate. R192 is a binding site for FMN.

This sequence belongs to the pyridoxamine 5'-phosphate oxidase family. In terms of assembly, homodimer. Requires FMN as cofactor.

The catalysed reaction is pyridoxamine 5'-phosphate + O2 + H2O = pyridoxal 5'-phosphate + H2O2 + NH4(+). It carries out the reaction pyridoxine 5'-phosphate + O2 = pyridoxal 5'-phosphate + H2O2. It functions in the pathway cofactor metabolism; pyridoxal 5'-phosphate salvage; pyridoxal 5'-phosphate from pyridoxamine 5'-phosphate: step 1/1. Its pathway is cofactor metabolism; pyridoxal 5'-phosphate salvage; pyridoxal 5'-phosphate from pyridoxine 5'-phosphate: step 1/1. Functionally, catalyzes the oxidation of either pyridoxine 5'-phosphate (PNP) or pyridoxamine 5'-phosphate (PMP) into pyridoxal 5'-phosphate (PLP). The sequence is that of Pyridoxine/pyridoxamine 5'-phosphate oxidase from Bordetella bronchiseptica (strain ATCC BAA-588 / NCTC 13252 / RB50) (Alcaligenes bronchisepticus).